A 520-amino-acid polypeptide reads, in one-letter code: Chaperone Ric-8B (520 aa).

The residue at position 468 (Ser-468) is a Phosphoserine. Thr-473 carries the post-translational modification Phosphothreonine.

This sequence belongs to the synembryn family. As to quaternary structure, interacts with GDP-bound G(s) G-alpha proteins GNAL and GNAS. Does not interact with G-alpha proteins when they are in complex with subunits beta and gamma. Predominantly expressed in the mature olfactory sensory neurons and also in a few regions in the brain.

It is found in the cytoplasm. The protein localises to the cell cortex. Chaperone that specifically binds and folds nascent G(s) G-alpha proteins (GNAS and GNAL) prior to G protein heterotrimer formation, promoting their association with the plasma membrane. Also acts as a guanine nucleotide exchange factor (GEF) for G(s) proteins by stimulating exchange of bound GDP for free GTP. Acts as an important component for odorant signal transduction by mediating GNAL (G(olf)-alpha) folding, thereby promoting-dependent cAMP accumulation in olfactory sensory neurons. This is Chaperone Ric-8B from Mus musculus (Mouse).